Consider the following 437-residue polypeptide: MHDKDVVFTAGPGGRMQGDIRVPGDKSISHRSVMLGSLAEGVTEVSGFLQAEDCLATMAAFRAMGVEIEGPTEGRLRIHGVGLHGLKPPAAPLDLGNSGTSMRLLSGLLAGQAFDTTLTGDASLVRRPMRRVTEPLRAMGARIDTTEAGTAPLRIAGGSRLKGIDYAMPVASAQVKSCLLLAGLYAEGKTCVTEPAPTRDHTERMLAGFGYPVARDGNRVCIQSGGKLSATRIDVPADISSAAFFMIGAAISPGSDVFLRHVGINPTRTGVIEILREMGADIEILAPREVGGEPVADLRIRYRELRGIRIPEHTVPLAIDEFPALFIAAACATGETVLTGAEELRVKESDRIQAMADGLTTLGIDARPTPDGMVIRGGSFRGGAVDSRGDHRIAMSFSIAALRAPIPIEIHDCANVATSFPNFVELARTLGLDIEVS.

3-phosphoshikimate is bound by residues lysine 26, serine 27, and arginine 31. Lysine 26 is a binding site for phosphoenolpyruvate. 2 residues coordinate phosphoenolpyruvate: glycine 99 and arginine 127. Positions 172, 174, 320, and 347 each coordinate 3-phosphoshikimate. A phosphoenolpyruvate-binding site is contributed by glutamine 174. Aspartate 320 serves as the catalytic Proton acceptor. 2 residues coordinate phosphoenolpyruvate: arginine 351 and arginine 392.

This sequence belongs to the EPSP synthase family. As to quaternary structure, monomer.

It is found in the cytoplasm. The catalysed reaction is 3-phosphoshikimate + phosphoenolpyruvate = 5-O-(1-carboxyvinyl)-3-phosphoshikimate + phosphate. The protein operates within metabolic intermediate biosynthesis; chorismate biosynthesis; chorismate from D-erythrose 4-phosphate and phosphoenolpyruvate: step 6/7. Its function is as follows. Catalyzes the transfer of the enolpyruvyl moiety of phosphoenolpyruvate (PEP) to the 5-hydroxyl of shikimate-3-phosphate (S3P) to produce enolpyruvyl shikimate-3-phosphate and inorganic phosphate. This chain is 3-phosphoshikimate 1-carboxyvinyltransferase, found in Methylococcus capsulatus (strain ATCC 33009 / NCIMB 11132 / Bath).